A 183-amino-acid polypeptide reads, in one-letter code: Regulatory protein RecX (183 aa).

Residues 1–12 (MTSFPHPSTSES) are compositionally biased toward polar residues. Residues 1–26 (MTSFPHPSTSESGPDPDSEPNREEQA) form a disordered region.

Belongs to the RecX family.

Its subcellular location is the cytoplasm. In terms of biological role, modulates RecA activity. The polypeptide is Regulatory protein RecX (Mycobacterium sp. (strain KMS)).